The primary structure comprises 517 residues: Pentatricopeptide repeat-containing protein At5g42450, mitochondrial (517 aa).

Residues 1 to 23 (MLHMILSQRVILLRKYHSSANAL) constitute a mitochondrion transit peptide. PPR repeat units follow at residues 57–91 (DVIS…GIRP), 92–126 (NEFT…GLAS), 127–157 (NVFV…TRDP), 158–188 (NVVS…MPER), 189–223 (SVVT…GVVI), 225–259 (NEST…LGKR), 261–291 (NVFV…LEEE), 294–329 (NIVS…NLRP), and 368–398 (ELEH…MPLD). Residues 403–478 (FWKALLGGCQ…FTGCSWIEVR (76 aa)) form a type E motif region. The tract at residues 479–509 (DQIRVFVNADKNNELKDEVYRMLALVSQHLE) is type E(+) motif.

This sequence belongs to the PPR family. PCMP-E subfamily.

Its subcellular location is the mitochondrion. The sequence is that of Pentatricopeptide repeat-containing protein At5g42450, mitochondrial (PCMP-E102) from Arabidopsis thaliana (Mouse-ear cress).